Here is a 551-residue protein sequence, read N- to C-terminus: Solute carrier family 22 member 6 (551 aa).

Residues 1–9 (MAFNDLLKQ) lie on the Cytoplasmic side of the membrane. A helical transmembrane segment spans residues 10–30 (VGGVGRFQLIQVTMVVAPLLL). Topologically, residues 31 to 135 (MASHNTLQNF…LVCSHRAFRQ (105 aa)) are extracellular. 4 N-linked (GlcNAc...) asparagine glycosylation sites follow: asparagine 39, asparagine 56, asparagine 92, and asparagine 113. Residues 136-156 (LAQSLYMVGVLLGAMVFGYLA) form a helical membrane-spanning segment. Residues 157–164 (DRLGRRKV) are Cytoplasmic-facing. The chain crosses the membrane as a helical span at residues 165 to 187 (LILNYLQTAVSGTCAAYAPNYTV). Topologically, residues 188–195 (YCVFRLLS) are extracellular. The helical transmembrane segment at 196-216 (GMSLASIAINCMTLNVEWMPI) threads the bilayer. At 217–224 (HTRAYVGT) the chain is on the cytoplasmic side. A helical transmembrane segment spans residues 225-245 (LIGYVYSLGQFLLAGIAYAVP). Residues 246–248 (HWR) lie on the Extracellular side of the membrane. A helical transmembrane segment spans residues 249–269 (HLQLVVSVPFFIAFIYSWFFI). The Cytoplasmic segment spans residues 270 to 337 (ESARWYSSSG…ELLRCPTLRH (68 aa)). A helical transmembrane segment spans residues 338 to 358 (LFLCLSMLWFATSFAYYGLVM). Topologically, residues 359-368 (DLQGFGVSMY) are extracellular. Residues 369 to 389 (LIQVIFGAVDLPAKFVCFLVI) form a helical membrane-spanning segment. Residues 390–395 (NSMGRR) lie on the Cytoplasmic side of the membrane. The chain crosses the membrane as a helical span at residues 396–416 (PAQMASLLLAGICILVNGIIP). Residues 417 to 425 (KSHTIIRTS) are Extracellular-facing. Residues 426-446 (LAVLGKGCLASSFNCIFLYTG) traverse the membrane as a helical segment. Residues 447 to 484 (ELYPTVIRQTGLGMGSTMARVGSIVSPLVSMTAEFYPS) are Cytoplasmic-facing. The helical transmembrane segment at 485-505 (MPLFIFGAVPVVASAVTALLP) threads the bilayer. Over 506–551 (ETLGQPLPDTVQDLKSRSRGKQNQQQQEQQKQMMPLQASTQEKNGL) the chain is Extracellular. The interval 514 to 551 (DTVQDLKSRSRGKQNQQQQEQQKQMMPLQASTQEKNGL) is disordered. Residues 526 to 537 (KQNQQQQEQQKQ) are compositionally biased toward low complexity. Over residues 542-551 (QASTQEKNGL) the composition is skewed to polar residues.

It belongs to the major facilitator (TC 2.A.1) superfamily. Organic cation transporter (TC 2.A.1.19) family. Glycosylated. Glycosylation is necessary for proper targeting of the transporter to the plasma membrane. As to expression, highly expressed in kidney; in the particular segment of the proximal tubule. In kidney, found preferentially in the cortex and outer medulla and weakly in the inner medulla. Expressed to a lower extent in brain.

Its subcellular location is the cell membrane. The protein localises to the basolateral cell membrane. It is found in the basal cell membrane. The catalysed reaction is (6R)-L-erythro-5,6,7,8-tetrahydrobiopterin(out) + a dicarboxylate(in) = (6R)-L-erythro-5,6,7,8-tetrahydrobiopterin(in) + a dicarboxylate(out). It carries out the reaction L-erythro-7,8-dihydrobiopterin(out) + a dicarboxylate(in) = L-erythro-7,8-dihydrobiopterin(in) + a dicarboxylate(out). The enzyme catalyses L-sepiapterin(out) + a dicarboxylate(in) = L-sepiapterin(in) + a dicarboxylate(out). It catalyses the reaction prostaglandin F2alpha(out) + a dicarboxylate(in) = prostaglandin F2alpha(in) + a dicarboxylate(out). The catalysed reaction is prostaglandin E2(out) + a dicarboxylate(in) = prostaglandin E2(in) + a dicarboxylate(out). It carries out the reaction 3',5'-cyclic AMP(out) + a dicarboxylate(in) = 3',5'-cyclic AMP(in) + a dicarboxylate(out). The enzyme catalyses 3',5'-cyclic GMP(out) + a dicarboxylate(in) = 3',5'-cyclic GMP(in) + a dicarboxylate(out). It catalyses the reaction urate(out) + a dicarboxylate(in) = urate(in) + a dicarboxylate(out). The catalysed reaction is kynurenate(out) + glutarate(in) = kynurenate(in) + glutarate(out). It carries out the reaction (indol-3-yl)acetate(out) + a dicarboxylate(in) = (indol-3-yl)acetate(in) + a dicarboxylate(out). The enzyme catalyses indoxyl sulfate(out) + a dicarboxylate(in) = indoxyl sulfate(in) + a dicarboxylate(out). It catalyses the reaction N-benzoylglycine(out) + a dicarboxylate(in) = N-benzoylglycine(in) + a dicarboxylate(out). The catalysed reaction is 3-carboxy-4-methyl-5-propyl-2-furanpropanoate(out) + a dicarboxylate(in) = 3-carboxy-4-methyl-5-propyl-2-furanpropanoate(in) + a dicarboxylate(out). Secondary active transporter that functions as a Na(+)-independent organic anion (OA)/dicarboxylate antiporter where the uptake of one molecule of OA into the cell is coupled with an efflux of one molecule of intracellular dicarboxylate such as alpha-ketoglutarate or glutarate. Mediates the uptake of OA across the basolateral side of proximal tubule epithelial cells, thereby contributing to the renal elimination of endogenous OA from the systemic circulation into the urine. Function as a biopterin transporters involved in the uptake and the secretion of coenzymes tetrahydrobiopterin (BH4) dihydrobiopterin (BH2) and sepiapterin to urine, thereby determining baseline levels of blood biopterins. Transports prostaglandin E2 (PGE2) and prostaglandin F2-alpha (PGF2-alpha) and may contribute to their renal excretion. Also mediates the uptake of cyclic nucleotides such as cAMP and cGMP. Involved in the transport of neuroactive tryptophan metabolites kynurenate (KYNA) and xanthurenate (XA) and may contribute to their secretion from the brain. May transport glutamate. Also involved in the disposition of uremic toxins and potentially toxic xenobiotics by the renal organic anion secretory pathway, helping reduce their undesired toxicological effects on the body. Uremic toxins include the indoxyl sulfate (IS), hippurate, indole acetate (IA), 3-carboxy-4- methyl-5-propyl-2-furanpropionate(CMPF) and urate. Xenobiotics include the mycotoxin ochratoxin (OTA). May also contribute to the transport of organic compounds in testes across the blood-testis-barrier. May also work as a bidirectional OA/dicarboxylate exchanger. In Rattus norvegicus (Rat), this protein is Solute carrier family 22 member 6.